The sequence spans 237 residues: 1-(5-phosphoribosyl)-5-[(5-phosphoribosylamino)methylideneamino] imidazole-4-carboxamide isomerase (237 aa).

Catalysis depends on Asp8, which acts as the Proton acceptor. The Proton donor role is filled by Asp129.

The protein belongs to the HisA/HisF family.

Its subcellular location is the cytoplasm. It carries out the reaction 1-(5-phospho-beta-D-ribosyl)-5-[(5-phospho-beta-D-ribosylamino)methylideneamino]imidazole-4-carboxamide = 5-[(5-phospho-1-deoxy-D-ribulos-1-ylimino)methylamino]-1-(5-phospho-beta-D-ribosyl)imidazole-4-carboxamide. It functions in the pathway amino-acid biosynthesis; L-histidine biosynthesis; L-histidine from 5-phospho-alpha-D-ribose 1-diphosphate: step 4/9. This is 1-(5-phosphoribosyl)-5-[(5-phosphoribosylamino)methylideneamino] imidazole-4-carboxamide isomerase from Methanosphaera stadtmanae (strain ATCC 43021 / DSM 3091 / JCM 11832 / MCB-3).